The following is a 212-amino-acid chain: MTQLADLRRTYVLGSLNESDVAGDPIAQFKRWFDEAVTAKLPEPNAMTLATVGADGQPSARIVLLKGMDEKGFTFFTNYESRKGLDMAANPRAALLFHWVQLERQVRVEGRVEKVADDESDAYYASRPLGSRLGAWASEQSREVPGRDVLEQRESEYRAKFGENPPRPAHWGGYRLVPTALEFWQGRPSRLHDRIAYRVEADGSWKIVRLSP.

Substrate-binding positions include 8-11 (RRTY) and Lys-66. FMN-binding positions include 61–66 (RIVLLK), 76–77 (FT), Arg-82, Lys-83, and Gln-105. 3 residues coordinate substrate: Tyr-123, Arg-127, and Ser-131. FMN-binding positions include 140-141 (QS) and Trp-184. Residue 190–192 (RLH) participates in substrate binding. Arg-194 is an FMN binding site.

It belongs to the pyridoxamine 5'-phosphate oxidase family. As to quaternary structure, homodimer. The cofactor is FMN.

It carries out the reaction pyridoxamine 5'-phosphate + O2 + H2O = pyridoxal 5'-phosphate + H2O2 + NH4(+). The enzyme catalyses pyridoxine 5'-phosphate + O2 = pyridoxal 5'-phosphate + H2O2. It participates in cofactor metabolism; pyridoxal 5'-phosphate salvage; pyridoxal 5'-phosphate from pyridoxamine 5'-phosphate: step 1/1. It functions in the pathway cofactor metabolism; pyridoxal 5'-phosphate salvage; pyridoxal 5'-phosphate from pyridoxine 5'-phosphate: step 1/1. Its function is as follows. Catalyzes the oxidation of either pyridoxine 5'-phosphate (PNP) or pyridoxamine 5'-phosphate (PMP) into pyridoxal 5'-phosphate (PLP). The sequence is that of Pyridoxine/pyridoxamine 5'-phosphate oxidase from Cupriavidus pinatubonensis (strain JMP 134 / LMG 1197) (Cupriavidus necator (strain JMP 134)).